The chain runs to 441 residues: Protein translocase subunit SecY (441 aa).

10 helical membrane-spanning segments follow: residues 25–45 (YFVI…IPGI), 78–98 (IFAL…ILTL), 126–146 (LILA…IPGL), 155–175 (ISFY…LMWL), 184–204 (IGNG…PSSF), 218–238 (VLLF…VVYI), 275–295 (VIPA…ASWF), 318–338 (YILT…GLAF), 376–396 (FLGS…RFFM), and 398–418 (VPFY…IDFI).

Belongs to the SecY/SEC61-alpha family. As to quaternary structure, component of the Sec protein translocase complex. Heterotrimer consisting of SecY, SecE and SecG subunits. The heterotrimers can form oligomers, although 1 heterotrimer is thought to be able to translocate proteins. Interacts with the ribosome. Interacts with SecDF, and other proteins may be involved. Interacts with SecA.

The protein resides in the cell membrane. The central subunit of the protein translocation channel SecYEG. Consists of two halves formed by TMs 1-5 and 6-10. These two domains form a lateral gate at the front which open onto the bilayer between TMs 2 and 7, and are clamped together by SecE at the back. The channel is closed by both a pore ring composed of hydrophobic SecY resides and a short helix (helix 2A) on the extracellular side of the membrane which forms a plug. The plug probably moves laterally to allow the channel to open. The ring and the pore may move independently. The polypeptide is Protein translocase subunit SecY (Buchnera aphidicola subsp. Baizongia pistaciae (strain Bp)).